A 176-amino-acid polypeptide reads, in one-letter code: Large ribosomal subunit protein uL22z (176 aa).

Over residues 154–163 (KEEPVKKEPE) the composition is skewed to basic and acidic residues. The segment at 154-176 (KEEPVKKEPETQLAAKSKKGASS) is disordered.

This sequence belongs to the universal ribosomal protein uL22 family.

The polypeptide is Large ribosomal subunit protein uL22z (RPL17A) (Arabidopsis thaliana (Mouse-ear cress)).